Reading from the N-terminus, the 154-residue chain is Protein FAM162A (154 aa).

Positions 76–102 (RFKKEDEIPETVSLEMLDTAKNKMRVK) are required for proapoptotic activity. A helical transmembrane segment spans residues 103–120 (ISYLMIALTVVGCICMVI).

This sequence belongs to the UPF0389 family. In terms of assembly, interacts with HSP90AB1; HSP90AB1 is essential for FAM162A mitochondrial localization and pro-apoptotic activity. Interacts with VDAC2; the interaction is probably involved in inducing mitochondrial permeability transition.

The protein localises to the mitochondrion membrane. In terms of biological role, proposed to be involved in regulation of apoptosis; the exact mechanism may differ between cell types/tissues. May be involved in hypoxia-induced cell death of transformed cells implicating cytochrome C release and caspase activation (such as CASP9) and inducing mitochondrial permeability transition. May be involved in hypoxia-induced cell death of neuronal cells probably by promoting release of AIFM1 from mitochondria to cytoplasm and its translocation to the nucleus; however, the involvement of caspases has been reported conflictingly. This Pongo abelii (Sumatran orangutan) protein is Protein FAM162A (FAM162A).